A 395-amino-acid chain; its full sequence is MDVLFSIAKTVSDLKKKVVVGTIYTNVEDIIQQTNELIRTLNGNTFHTGGIGTQPQKEWNFQLPQLGTTLLNLDDNYVQATRSVIDYLASFIEAVCDDEIVREASRNGMQPQSPTLIALASSKFKTINFNNSSQSIKNWSAQSRRENPVYEYKNPMVFEYRNSYILQRANPQYGNVMGLRYYTASNTCQLAAFDSTLAENAPNNTQRFIYNGRLKRPISNVLMKIEAGAPNINNLTILPDPTNQTTWLYNPDQLMNGTFTIEFYNNGQLVDMVRNMGVVTVRTFDSYRITIDMIRPAAMTQYVQRLFPQGGPYPYQAAYMLTLSILDATTESVLCDSHSVDYSIVANVRRDSAMPAGTVFQPGFPWEQTLSNYTVAQEDNLERLLLVASVKRMVM.

It belongs to the rotavirus VP6 family. Homotrimer. Interacts with the inner capsid protein VP2. Interacts with the outer capsid glycoprotein VP7.

It is found in the virion. In terms of biological role, intermediate capsid protein that self assembles to form an icosahedral capsid with a T=13 symmetry, which consists of 230 trimers of VP6, with channels at each of its five-fold vertices. This capsid constitutes the middle concentric layer of the viral mature particle. The innermost VP2 capsid and the intermediate VP6 capsid remain intact following cell entry to protect the dsRNA from degradation and to prevent unfavorable antiviral responses in the host cell during all the replication cycle of the virus. Nascent transcripts are transcribed within the structural confines of this double-layered particle (DLP) and are extruded through the channels at the five-fold axes. VP6 is required for the transcription activity of the DLP. In Rotavirus C (strain RVC/Pig/United States/Cowden/1980) (RV-C), this protein is Intermediate capsid protein VP6.